Consider the following 279-residue polypeptide: Four and a half LIM domains protein 2 (279 aa).

The C4-type zinc-finger motif lies at cysteine 7 to cysteine 31. LIM zinc-binding domains are found at residues cysteine 40 to cysteine 92, cysteine 101 to cysteine 153, and cysteine 162 to cysteine 212. Residue lysine 78 forms a Glycyl lysine isopeptide (Lys-Gly) (interchain with G-Cter in SUMO2) linkage. Residues lysine 167 and lysine 220 each participate in a glycyl lysine isopeptide (Lys-Gly) (interchain with G-Cter in SUMO2) cross-link. The region spanning cysteine 221–cysteine 275 is the LIM zinc-binding 4 domain. The residue at position 238 (serine 238) is a Phosphoserine.

Interacts with ZNF638 and TTN/titin. Interacts with E4F1. Interacts with GRB7. Interacts with SIRT1 and FOXO1. Interacts with CEFIP. Interacts with calcineurin. Interacts with FOXK1. As to expression, highly expressed in heart but also detectable in brain and skeletal muscle.

It localises to the cytoplasm. The protein localises to the nucleus. The protein resides in the myofibril. Its subcellular location is the sarcomere. It is found in the z line. Its function is as follows. May function as a molecular transmitter linking various signaling pathways to transcriptional regulation. Negatively regulates the transcriptional repressor E4F1 and may function in cell growth. Inhibits the transcriptional activity of FOXO1 and its apoptotic function by enhancing the interaction of FOXO1 with SIRT1 and FOXO1 deacetylation. Negatively regulates the calcineurin/NFAT signaling pathway in cardiomyocytes. The protein is Four and a half LIM domains protein 2 (Fhl2) of Mus musculus (Mouse).